Consider the following 486-residue polypeptide: Cobyric acid synthase (486 aa).

Positions 248 to 435 (VLNVVVPVLP…LHGLFESPAA (188 aa)) constitute a GATase cobBQ-type domain. Cys329 functions as the Nucleophile in the catalytic mechanism. The active site involves His427.

Belongs to the CobB/CobQ family. CobQ subfamily.

Its pathway is cofactor biosynthesis; adenosylcobalamin biosynthesis. In terms of biological role, catalyzes amidations at positions B, D, E, and G on adenosylcobyrinic A,C-diamide. NH(2) groups are provided by glutamine, and one molecule of ATP is hydrogenolyzed for each amidation. The sequence is that of Cobyric acid synthase from Pseudomonas syringae pv. tomato (strain ATCC BAA-871 / DC3000).